Reading from the N-terminus, the 449-residue chain is Trigger factor (449 aa).

Residues 160–231 (TDQVTIEELG…VQSVQTKQLQ (72 aa)) enclose the PPIase FKBP-type domain. The segment at 411–449 (GQQVAGRQEAGAEQTAQAAEQESGQPQAEGEQAAEQRGE) is disordered. Over residues 415–443 (AGRQEAGAEQTAQAAEQESGQPQAEGEQA) the composition is skewed to low complexity.

It belongs to the FKBP-type PPIase family. Tig subfamily.

It localises to the cytoplasm. The enzyme catalyses [protein]-peptidylproline (omega=180) = [protein]-peptidylproline (omega=0). In terms of biological role, involved in protein export. Acts as a chaperone by maintaining the newly synthesized protein in an open conformation. Functions as a peptidyl-prolyl cis-trans isomerase. In Deinococcus geothermalis (strain DSM 11300 / CIP 105573 / AG-3a), this protein is Trigger factor.